Reading from the N-terminus, the 332-residue chain is Transcription factor ZEB2 (332 aa).

The disordered stretch occupies residues 1 to 37 (MQSTESFHALPTRSDVEDPNERRKIQNRIAQKKHRQK). The span at 14–24 (SDVEDPNERRK) shows a compositional bias: basic and acidic residues. The bZIP domain occupies 17 to 50 (EDPNERRKIQNRIAQKKHRQKMKRRIEELETKVN). A basic motif region spans residues 21–43 (ERRKIQNRIAQKKHRQKMKRRIE). The tract at residues 45–52 (LETKVNNQ) is leucine-zipper. The segment at 106–170 (MHDSPRPNQQ…EGSLPTRQHD (65 aa)) is disordered. Positions 111–134 (RPNQQQRLSVSGMPSSPTSTSNVA) are enriched in polar residues. Over residues 143–155 (HSSASNHLSSLSL) the composition is skewed to low complexity. Residues 160-170 (TEGSLPTRQHD) show a composition bias toward polar residues.

The protein belongs to the bZIP family.

It localises to the nucleus. Its function is as follows. Transcription factor that specifically controls transcription of the zearalenone biosynthesis cluster genes. In Gibberella zeae (strain ATCC MYA-4620 / CBS 123657 / FGSC 9075 / NRRL 31084 / PH-1) (Wheat head blight fungus), this protein is Transcription factor ZEB2.